The primary structure comprises 141 residues: Protein GAT3 (141 aa).

The GATA-type zinc finger occupies 72–98; the sequence is CPQCAVIKTSPQWREGPDGEVTLCNAC.

This Saccharomyces cerevisiae (strain ATCC 204508 / S288c) (Baker's yeast) protein is Protein GAT3 (GAT3).